The following is a 405-amino-acid chain: L-carnitine CoA-transferase (405 aa).

CoA contacts are provided by K97 and R104. Residue D169 is the Nucleophile of the active site.

This sequence belongs to the CoA-transferase III family. CaiB subfamily. In terms of assembly, homodimer.

Its subcellular location is the cytoplasm. It carries out the reaction crotonobetainyl-CoA + (R)-carnitine = crotonobetaine + (R)-carnitinyl-CoA. The enzyme catalyses 4-(trimethylamino)butanoyl-CoA + (R)-carnitine = (R)-carnitinyl-CoA + 4-(trimethylamino)butanoate. The protein operates within amine and polyamine metabolism; carnitine metabolism. Catalyzes the reversible transfer of the CoA moiety from gamma-butyrobetainyl-CoA to L-carnitine to generate L-carnitinyl-CoA and gamma-butyrobetaine. Is also able to catalyze the reversible transfer of the CoA moiety from gamma-butyrobetainyl-CoA or L-carnitinyl-CoA to crotonobetaine to generate crotonobetainyl-CoA. The chain is L-carnitine CoA-transferase from Escherichia coli O127:H6 (strain E2348/69 / EPEC).